The primary structure comprises 737 residues: MDSHQLELPDGLNNMTMDADTLISLFVLVVCRSEQKHLKSHLYYLQNFSNNSSSTKFGILGYAVSTLEAVVCYFEDFNKNTGNVAKANTLCEKTKNLLDKLSCENPTNEVEDLATYKDILTYRNEQGQSILSICITNHKNYILLDILSEYENDFPVEDLLEDETIDGSTLLIESIKAGNLEAAKVLIKIMLFNCTEEELVSYINKTDKYARTVAHYLTHEMDILKSIGNYIDWKRKNSSGQTPLFSIFRSYDQPNYEEMVKTAFDIANTWYRKHNSLFDYLDHTDNKGNSLLHVLKTNIPILLQLTKLDINEENYKGLTPLMVYVKYKRLSNIDAITKDRRLILEKVQNSTFFTCFDYAKDHSVLSKIGERGVKDSLFGLIYFHSLRYHNLNATTNITSVSNAEKPFATTVINMKTIQGLLRSILKDNPFTFLPLNTYIDEISHLNRSDLTIIGKTDVTSLLHQLTNCFNVLLFLKKIPENLFTDEASILYWMRINTSKRNQKPSGKENPKTMEPEEINMIQSFLRFNFDEISSFKASLNILRKVLIFINLKSDDFEDAYKGLNEMGRKLINSEASSAFKGIITNHNMFSELSLAALLENVRFLEQCTIQLSSFVQIILFEKIPNWWKHYGEFLALHKSYRKAFPNMVKPKSASDTSSRAPLGGFIETKREQSEQRLAVQIKASSKMLKELGSEIFVAHERLAEELSNYMEFRKACLDQRSLVAFATTNISVLQECV.

Positions 1–83 (MDSHQLELPD…FEDFNKNTGN (83 aa)) constitute a VPS9 domain.

This sequence belongs to the UPF0507 family.

This chain is UPF0507 protein YML002W, found in Saccharomyces cerevisiae (strain ATCC 204508 / S288c) (Baker's yeast).